A 318-amino-acid polypeptide reads, in one-letter code: Ribonuclease Z (318 aa).

The Zn(2+) site is built by H62, H64, D66, H67, H139, D210, and H268. The active-site Proton acceptor is D66.

The protein belongs to the RNase Z family. Homodimer. Requires Zn(2+) as cofactor.

The enzyme catalyses Endonucleolytic cleavage of RNA, removing extra 3' nucleotides from tRNA precursor, generating 3' termini of tRNAs. A 3'-hydroxy group is left at the tRNA terminus and a 5'-phosphoryl group is left at the trailer molecule.. Zinc phosphodiesterase, which displays some tRNA 3'-processing endonuclease activity. Probably involved in tRNA maturation, by removing a 3'-trailer from precursor tRNA. The sequence is that of Ribonuclease Z from Gloeothece citriformis (strain PCC 7424) (Cyanothece sp. (strain PCC 7424)).